The primary structure comprises 464 residues: Cytochrome P450 85A1 (464 aa).

The chain crosses the membrane as a helical span at residues 2–22; sequence AFFLIFLSSFFGLCIFCTALL. Cysteine 414 provides a ligand contact to heme.

Belongs to the cytochrome P450 family. Heme is required as a cofactor. As to expression, expressed in sub-meristematic regions of shoot and root apexes, in zones undergoing lateral root formation, in fruits, and in all flower parts, with a high expression in young flower buds and at the joint in the pedicel.

It is found in the membrane. It catalyses the reaction 6-deoxocastasterone + reduced [NADPH--hemoprotein reductase] + O2 = 6alpha-hydroxycastasterone + oxidized [NADPH--hemoprotein reductase] + H2O + H(+). The enzyme catalyses 6alpha-hydroxycastasterone + reduced [NADPH--hemoprotein reductase] + O2 = castasterone + oxidized [NADPH--hemoprotein reductase] + 2 H2O + H(+). It carries out the reaction 6-deoxocastasterone + 2 reduced [NADPH--hemoprotein reductase] + 2 O2 = castasterone + 2 oxidized [NADPH--hemoprotein reductase] + 3 H2O + 2 H(+). Its pathway is plant hormone biosynthesis; brassinosteroid biosynthesis. Catalyzes the C6-oxidation step in brassinosteroids biosynthesis. Converts 6-deoxocastasterone (6-deoxoCS) to castasterone (CS). May also convert 6-deoxoteasterone (6-deoxoTE) to teasterone (TE), 3-dehydro-6-deoxoteasterone (6-deoxo3DT, 6-deoxo3DHT) to 3-dehydroteasterone (3DT, 3-DHT), and 6-deoxotyphasterol (6-deoxoTY) to typhasterol (TY), but not castasterone (CS) to brassinolide (BL). This Solanum lycopersicum (Tomato) protein is Cytochrome P450 85A1.